We begin with the raw amino-acid sequence, 311 residues long: Methionyl-tRNA formyltransferase (311 aa).

114–117 (SLLP) serves as a coordination point for (6S)-5,6,7,8-tetrahydrofolate.

Belongs to the Fmt family.

The enzyme catalyses L-methionyl-tRNA(fMet) + (6R)-10-formyltetrahydrofolate = N-formyl-L-methionyl-tRNA(fMet) + (6S)-5,6,7,8-tetrahydrofolate + H(+). Functionally, attaches a formyl group to the free amino group of methionyl-tRNA(fMet). The formyl group appears to play a dual role in the initiator identity of N-formylmethionyl-tRNA by promoting its recognition by IF2 and preventing the misappropriation of this tRNA by the elongation apparatus. This Corynebacterium diphtheriae (strain ATCC 700971 / NCTC 13129 / Biotype gravis) protein is Methionyl-tRNA formyltransferase.